The sequence spans 147 residues: Sec-independent protein translocase protein TatB (147 aa).

Residues 1–21 (MFDISFSEILVIAAVALIVIG) form a helical membrane-spanning segment. Positions 67-88 (EETGRSIENSVHTELDKFRETV) are enriched in basic and acidic residues. The tract at residues 67 to 147 (EETGRSIENS…GVNRERETAE (81 aa)) is disordered. A compositionally biased stretch (low complexity) spans 103 to 117 (APAGESSPPQNSSPA).

It belongs to the TatB family. The Tat system comprises two distinct complexes: a TatABC complex, containing multiple copies of TatA, TatB and TatC subunits, and a separate TatA complex, containing only TatA subunits. Substrates initially bind to the TatABC complex, which probably triggers association of the separate TatA complex to form the active translocon.

The protein localises to the cell inner membrane. Part of the twin-arginine translocation (Tat) system that transports large folded proteins containing a characteristic twin-arginine motif in their signal peptide across membranes. Together with TatC, TatB is part of a receptor directly interacting with Tat signal peptides. TatB may form an oligomeric binding site that transiently accommodates folded Tat precursor proteins before their translocation. This Nitrosospira multiformis (strain ATCC 25196 / NCIMB 11849 / C 71) protein is Sec-independent protein translocase protein TatB.